Reading from the N-terminus, the 2036-residue chain is Bikaverin polyketide synthase bik1 (2036 aa).

Positions 8–242 (YVFGDQSTPV…YPAPIYGPYH (235 aa)) are N-terminal acylcarrier protein transacylase domain (SAT). A Ketosynthase family 3 (KS3) domain is found at 370–801 (ENKIAIIGFS…GGNTSLLLED (432 aa)). Active-site for beta-ketoacyl synthase activity residues include Cys541, His676, and His718. The tract at residues 908-1209 (FLFTGQGAQE…LASLRRKEDH (302 aa)) is acyl/malonyl transferases. The active-site For acyl/malonyl transferase activity is Ser997. The tract at residues 1293-1425 (HNVIEQVHGD…CDVAVENPSS (133 aa)) is N-terminal hotdog fold. Residues 1293-1600 (HNVIEQVHGD…FKKVARKVLE (308 aa)) form the PKS/mFAS DH domain. The segment at 1295 to 1599 (VIEQVHGDKR…TFKKVARKVL (305 aa)) is product template (PT) domain. Catalysis depends on His1325, which acts as the Proton acceptor; for dehydratase activity. The segment at 1452–1600 (SAHMMRRGLL…FKKVARKVLE (149 aa)) is C-terminal hotdog fold. Asp1511 (proton donor; for dehydratase activity) is an active-site residue. The tract at residues 1628 to 1654 (VLTPPSTTSHSVGTTSPPEPTESPVGS) is disordered. The span at 1638–1654 (SVGTTSPPEPTESPVGS) shows a compositional bias: low complexity. The Carrier domain occupies 1653–1730 (GSASGLIQKA…DLKSFLGAND (78 aa)). At Ser1690 the chain carries O-(pantetheine 4'-phosphoryl)serine. Positions 1733–1758 (FSSSNSEAESSASSAASTSPSDHGDD) are disordered. The segment covering 1734–1753 (SSSNSEAESSASSAASTSPS) has biased composition (low complexity). The active-site For thioesterase activity is Ser1857.

It participates in secondary metabolite biosynthesis. Its function is as follows. Polyketide synthase; part of the gene cluster that mediates the biosynthesis of bikaverin, a red pigment also considered as a mycotoxin. The first stage is catalyzed by the polyketide synthase bik1, which catalyzes the formation of the intermediate SMA76a also knowm as pre-bikaverin. FAD-dependent monooxygenase bik2 might then be responsible for the oxidation of pre-bikaverin to oxo-pre-bikaverin which is in turn methylated by the O-methyltransferase bik3 to me-oxo-pre-bikaverin. A further cycle of oxydation and methylation by bik2 and bik3 leads to the final product of bikaverin, via a nor-bikaverin intermediate. This Gibberella fujikuroi (strain CBS 195.34 / IMI 58289 / NRRL A-6831) (Bakanae and foot rot disease fungus) protein is Bikaverin polyketide synthase bik1.